The primary structure comprises 202 residues: 3-isopropylmalate dehydratase small subunit (202 aa).

Belongs to the LeuD family. LeuD type 1 subfamily. In terms of assembly, heterodimer of LeuC and LeuD.

It catalyses the reaction (2R,3S)-3-isopropylmalate = (2S)-2-isopropylmalate. It participates in amino-acid biosynthesis; L-leucine biosynthesis; L-leucine from 3-methyl-2-oxobutanoate: step 2/4. Catalyzes the isomerization between 2-isopropylmalate and 3-isopropylmalate, via the formation of 2-isopropylmaleate. The protein is 3-isopropylmalate dehydratase small subunit of Rhizobium etli (strain CIAT 652).